The sequence spans 690 residues: Translation initiation factor IF-2 (690 aa).

A tr-type G domain is found at 178–346; the sequence is PRPPVVTVMG…MILLVAEMNE (169 aa). A G1 region spans residues 187 to 194; it reads GHVDHGKT. Residue 187-194 participates in GTP binding; the sequence is GHVDHGKT. Positions 212–216 are G2; that stretch reads GITQS. Residues 233–236 are G3; sequence DTPG. Residues 233 to 237 and 287 to 290 contribute to the GTP site; these read DTPGH and NKID. The interval 287–290 is G4; that stretch reads NKID. The G5 stretch occupies residues 324–326; it reads SAR.

This sequence belongs to the TRAFAC class translation factor GTPase superfamily. Classic translation factor GTPase family. IF-2 subfamily.

The protein resides in the cytoplasm. Its function is as follows. One of the essential components for the initiation of protein synthesis. Protects formylmethionyl-tRNA from spontaneous hydrolysis and promotes its binding to the 30S ribosomal subunits. Also involved in the hydrolysis of GTP during the formation of the 70S ribosomal complex. The protein is Translation initiation factor IF-2 of Thermotoga sp. (strain RQ2).